Reading from the N-terminus, the 47-residue chain is Thionin (47 aa).

Intrachain disulfides connect C3-C41, C4-C33, C12-C31, and C16-C27.

Belongs to the plant thionin (TC 1.C.44) family. 4 C-C subfamily.

The protein resides in the secreted. Thionins are small plant proteins which are toxic to animal cells. They seem to exert their toxic effect at the level of the cell membrane. Their precise function is not known. This chain is Thionin (THI1), found in Pyrularia pubera (Buffalo nut).